The following is a 299-amino-acid chain: tRNA uridine(34) hydroxylase (299 aa).

The Rhodanese domain maps to 132–226 (AGRPVVMLDT…YFEEVGGAHY (95 aa)). The Cysteine persulfide intermediate role is filled by cysteine 186.

The protein belongs to the TrhO family.

It catalyses the reaction uridine(34) in tRNA + AH2 + O2 = 5-hydroxyuridine(34) in tRNA + A + H2O. Its function is as follows. Catalyzes oxygen-dependent 5-hydroxyuridine (ho5U) modification at position 34 in tRNAs. This is tRNA uridine(34) hydroxylase from Burkholderia pseudomallei (strain 1106a).